We begin with the raw amino-acid sequence, 463 residues long: Putative pentatricopeptide repeat-containing protein At4g17915 (463 aa).

12 PPR repeats span residues 12–46 (STRL…GVDP), 47–81 (DVVT…GIRP), 82–116 (DVAT…GIYP), 117–152 (DLWS…GLNP), 153–186 (GPDT…RFKP), 187–221 (ELMT…GYTP), 222–256 (NAVT…GYTY), 257–291 (DGYA…GRRH), 292–326 (DIVS…GMKA), 327–361 (DEYT…GIGL), 362–392 (NLVT…MEVK), and 393–427 (DEYT…GIKI).

This sequence belongs to the PPR family. P subfamily.

The chain is Putative pentatricopeptide repeat-containing protein At4g17915 from Arabidopsis thaliana (Mouse-ear cress).